We begin with the raw amino-acid sequence, 722 residues long: MLLTTGRKEKLSVSKGSEIEISSQEYEYGSGNVWYCVILEENLAKSKRKKLSVRHLDPLLKYDYSPPLIKTTVHRFMRPVPPPDPFPEVDFEEGDVVDAAYKGGWCSGSVVKVLGNRRFLVYLRFQPDVIELLRKDLRPHFVWKDEEWFRCEKQQLIESDFSAGKSVEVRTKVDKLGDVWAPAMVIKEDEDGTMLVKLKTLKEEEVNCTKISVSYSEIRPSPLPIGLRDYKLMENVDALVESGWCPGVVSKVLAGKRYAVDLGPNRESKEFSRLQLRPSIEWKDGIWHRKEKVSGSEESSHAVEETAASTRIRITVRTALKEKKALGTGINVRTTRSSSGAMHNPLPASFNGGDVAEAGRVSVTVNETPLFETAALSGELGNSLADVVMNESAPVTSQPEIAAPKEFHPSVVLGVAAAVKTQGKTTPKKKLQAMKNQKSSTNDSVGEKVSVNKRKRGQPRKFIVAEPKQKIGVSGNNSKAATIEHADMTDDDRPLASWVHTGNSSSGQSVSRTPDIGLNTVVEKHVDIVETPPGRESTMVLPFVKKSQLWKVLESMEVFKVVPQSPHFSPLLESEEECREGDAIGRMVMFSSLLEKVNNLQVDDPISSINRIDECFLKLEKHGFNVTTPRSRIAKILSIKERQTCALEELKAVEEKITENDNKRRKYEEDIVELQRQEVLMKEAKVTLDNEIARMQSQAAVLDQEVQNVDHEFQAILAAPWK.

The tract at residues 424 to 449 (KTTPKKKLQAMKNQKSSTNDSVGEKV) is disordered. A compositionally biased stretch (polar residues) spans 434–444 (MKNQKSSTNDS). A DUF724 domain is found at 540-720 (VLPFVKKSQL…HEFQAILAAP (181 aa)). Residues 645 to 712 (CALEELKAVE…DQEVQNVDHE (68 aa)) are a coiled coil.

Homodimer. Interacts wtih ABAP1, ARIA and LHP1. Interacts with the non-modified histones H1, H2B, H3 and H4. As to expression, expressed in roots, leaves, stems and flowers.

The protein localises to the nucleus. Its function is as follows. May act as a link between DNA replication, transcription and chromatin remodeling during flower development. May participate in the repression of LHP1-targeted genes during flower development by direct interaction with LHP1. May be involved in the polar growth of plant cells via transportation of RNAs. The chain is DUF724 domain-containing protein 7 from Arabidopsis thaliana (Mouse-ear cress).